We begin with the raw amino-acid sequence, 962 residues long: Leucine--tRNA ligase (962 aa).

A 'HIGH' region motif is present at residues 41 to 51 (PYLNGNLHAGH). The 'KMSKS' region motif lies at 631-635 (KMSKS). ATP is bound at residue Lys634.

Belongs to the class-I aminoacyl-tRNA synthetase family.

It is found in the cytoplasm. The catalysed reaction is tRNA(Leu) + L-leucine + ATP = L-leucyl-tRNA(Leu) + AMP + diphosphate. This chain is Leucine--tRNA ligase, found in Methanococcoides burtonii (strain DSM 6242 / NBRC 107633 / OCM 468 / ACE-M).